Consider the following 178-residue polypeptide: Caveolin-1 (178 aa).

Position 2 is an N-acetylserine (S2). Phosphoserine is present on S2. The segment at 2-94 (SGGKYVDSEG…WKASFTTFTV (93 aa)) is required for homooligomerization. Over 2-104 (SGGKYVDSEG…TKYWFYRLLS (103 aa)) the chain is Cytoplasmic. K5 carries the N6-acetyllysine; alternate modification. A Glycyl lysine isopeptide (Lys-Gly) (interchain with G-Cter in ubiquitin); alternate cross-link involves residue K5. Y6 is modified (phosphotyrosine). S9 carries the post-translational modification Phosphoserine. At Y14 the chain carries Phosphotyrosine; by ABL1. Y25 carries the post-translational modification Phosphotyrosine. Residues K26, K30, K39, K47, and K57 each participate in a glycyl lysine isopeptide (Lys-Gly) (interchain with G-Cter in ubiquitin) cross-link. The tract at residues 82-94 (DGIWKASFTTFTV) is interaction with CAVIN3. An intramembrane region (helical) is located at residues 105–125 (GIFGIPMALIWGVYFAILSFL). Over 126–178 (HIWAVVPCIKSFLIEIQCISRVYSIYVHTFCDPLFEAIGKIFSNIRISTQKEI) the chain is Cytoplasmic. The interval 131–142 (VPCIKSFLIEIQ) is interacts with SPRY1, SPRY2, SPRY3 and SPRY4. 3 S-palmitoyl cysteine lipidation sites follow: C133, C143, and C156. The tract at residues 149-160 (SIYVHTFCDPLF) is interacts with SPRY1, SPRY2, and SPRY4. The interacts with SPRY1, SPRY2, SPRY3 and SPRY4 stretch occupies residues 167-178 (FSNIRISTQKEI).

This sequence belongs to the caveolin family. In terms of assembly, homooligomer. Interacts with GLIPR2. Interacts with NOSTRIN. Interacts with SNAP25 and STX1A. Interacts (via the N-terminus) with DPP4; the interaction is direct. Interacts with CTNNB1, CDH1 and JUP. Interacts with PACSIN2; this interaction induces membrane tubulation. Interacts with SLC7A9. Interacts with BMX and BTK. Interacts with TGFBR1. Interacts with CAVIN3 (via leucine-zipper domain) in a cholesterol-sensitive manner. Interacts with CAVIN1. Interacts with EHD2 in a cholesterol-dependent manner. Forms a ternary complex with UBXN6 and VCP; mediates CAV1 targeting to lysosomes for degradation. Interacts with ABCG1; this interaction regulates ABCG1-mediated cholesterol efflux. Interacts with NEU3; this interaction enhances NEU3 sialidase activity within caveola. Interacts (via C-terminus) with SPRY1, SPRY2 (via C-terminus), SPRY3, and SPRY4. Interacts with IGFBP5; this interaction allows trafficking of IGFBP5 from the plasma membrane to the nucleus. Post-translationally, phosphorylated at Tyr-14 by ABL1 in response to oxidative stress. Ubiquitinated. Undergo monoubiquitination and multi- and/or polyubiquitination. Monoubiquitination of N-terminal lysines promotes integration in a ternary complex with UBXN6 and VCP which promotes oligomeric CAV1 targeting to lysosomes for degradation. Ubiquitinated by ZNRF1; leading to degradation and modulation of the TLR4-mediated immune response.

Its subcellular location is the golgi apparatus membrane. The protein localises to the cell membrane. The protein resides in the membrane. It is found in the caveola. It localises to the membrane raft. May act as a scaffolding protein within caveolar membranes. Forms a stable heterooligomeric complex with CAV2 that targets to lipid rafts and drives caveolae formation. Mediates the recruitment of CAVIN proteins (CAVIN1/2/3/4) to the caveolae. Interacts directly with G-protein alpha subunits and can functionally regulate their activity. Involved in the costimulatory signal essential for T-cell receptor (TCR)-mediated T-cell activation. Its binding to DPP4 induces T-cell proliferation and NF-kappa-B activation in a T-cell receptor/CD3-dependent manner. Recruits CTNNB1 to caveolar membranes and may regulate CTNNB1-mediated signaling through the Wnt pathway. Negatively regulates TGFB1-mediated activation of SMAD2/3 by mediating the internalization of TGFBR1 from membrane rafts leading to its subsequent degradation. Binds 20(S)-hydroxycholesterol (20(S)-OHC). This is Caveolin-1 (CAV1) from Echinops telfairi (Lesser hedgehog tenrec).